Reading from the N-terminus, the 136-residue chain is Active regulator of SIRT1 (136 aa).

The residue at position 7 (Arg7) is a Citrulline. The segment at 13–58 (LAASEAPRDPPGQAKPRGAPVKRPRKTKAIQAQKLRNSAKGKVPKS) is disordered. Residue Ser84 is modified to Phosphoserine.

It belongs to the AROS family. As to quaternary structure, part of the small subunit (SSU) processome, composed of more than 70 proteins and the RNA chaperone small nucleolar RNA (snoRNA) U3. Interacts with RPS19; the interaction is direct and mediates the integration of RPS19 in state post-A1. Interacts with SIRT1. Post-translationally, citrullinated by PADI4. As to expression, widely expressed (at protein level).

Its subcellular location is the nucleus. The protein localises to the nucleolus. Functionally, part of the small subunit (SSU) processome, first precursor of the small eukaryotic ribosomal subunit. During the assembly of the SSU processome in the nucleolus, many ribosome biogenesis factors, an RNA chaperone and ribosomal proteins associate with the nascent pre-rRNA and work in concert to generate RNA folding, modifications, rearrangements and cleavage as well as targeted degradation of pre-ribosomal RNA by the RNA exosome. Acts as a chaperone that specifically mediates the integration of RPS19 in state post-A1. Direct regulator of SIRT1. Enhances SIRT1-mediated deacetylation of p53/TP53, thereby participating in inhibition of p53/TP53-mediated transcriptional activity. The sequence is that of Active regulator of SIRT1 from Homo sapiens (Human).